The chain runs to 329 residues: Methionyl-tRNA formyltransferase (329 aa).

Residue 117 to 120 coordinates (6S)-5,6,7,8-tetrahydrofolate; it reads SLLP.

It belongs to the Fmt family.

The enzyme catalyses L-methionyl-tRNA(fMet) + (6R)-10-formyltetrahydrofolate = N-formyl-L-methionyl-tRNA(fMet) + (6S)-5,6,7,8-tetrahydrofolate + H(+). Functionally, attaches a formyl group to the free amino group of methionyl-tRNA(fMet). The formyl group appears to play a dual role in the initiator identity of N-formylmethionyl-tRNA by promoting its recognition by IF2 and preventing the misappropriation of this tRNA by the elongation apparatus. This chain is Methionyl-tRNA formyltransferase, found in Paracidovorax citrulli (strain AAC00-1) (Acidovorax citrulli).